We begin with the raw amino-acid sequence, 827 residues long: Leucine--tRNA ligase (827 aa).

The short motif at 42-52 (PYPSGKLHMGH) is the 'HIGH' region element. Residues 581–585 (KMSKS) carry the 'KMSKS' region motif. Lys584 lines the ATP pocket.

Belongs to the class-I aminoacyl-tRNA synthetase family.

It localises to the cytoplasm. It catalyses the reaction tRNA(Leu) + L-leucine + ATP = L-leucyl-tRNA(Leu) + AMP + diphosphate. The sequence is that of Leucine--tRNA ligase from Desulforamulus reducens (strain ATCC BAA-1160 / DSM 100696 / MI-1) (Desulfotomaculum reducens).